A 270-amino-acid polypeptide reads, in one-letter code: Oxidoreductase claK (270 aa).

This sequence belongs to the avfA family.

Its pathway is pigment biosynthesis. In terms of biological role, oxidoreductase; part of the gene cluster that mediates the biosynthesis of the bianthraquinone cladofulvin, a conidial pigment not required for virulence but that plays a role in fitness and resistance to environmental stresses including UV light and low-temperature stress. The pathway begins with the synthesis of atrochrysone thioester by the polyketide synthase (PKS) claG. The atrochrysone carboxyl ACP thioesterase claF then breaks the thioester bond and releases the atrochrysone carboxylic acid from claG. This compound is decarboxylated by claH to yield emodin, which is further converted to chrysophanol hydroquinone by the reductase claC and the dehydratase claB. The cytochrome monooxygenase P450 claM then catalyzes the dimerization of nataloe-emodin to cladofulvin. The polypeptide is Oxidoreductase claK (Passalora fulva (Tomato leaf mold)).